The sequence spans 337 residues: RNA 3'-terminal phosphate cyclase (337 aa).

ATP-binding positions include Gln101 and 282 to 285; that span reads HMSD. Catalysis depends on His306, which acts as the Tele-AMP-histidine intermediate.

It belongs to the RNA 3'-terminal cyclase family. Type 1 subfamily.

It localises to the cytoplasm. The enzyme catalyses a 3'-end 3'-phospho-ribonucleotide-RNA + ATP = a 3'-end 2',3'-cyclophospho-ribonucleotide-RNA + AMP + diphosphate. Its function is as follows. Catalyzes the conversion of 3'-phosphate to a 2',3'-cyclic phosphodiester at the end of RNA. The mechanism of action of the enzyme occurs in 3 steps: (A) adenylation of the enzyme by ATP; (B) transfer of adenylate to an RNA-N3'P to produce RNA-N3'PP5'A; (C) and attack of the adjacent 2'-hydroxyl on the 3'-phosphorus in the diester linkage to produce the cyclic end product. The biological role of this enzyme is unknown but it is likely to function in some aspects of cellular RNA processing. This is RNA 3'-terminal phosphate cyclase from Saccharolobus islandicus (strain M.16.4 / Kamchatka #3) (Sulfolobus islandicus).